The sequence spans 189 residues: Orcokinin peptides (189 aa).

A signal peptide spans 1–21; it reads MRGAGGALAVAVAALLVCCSA. 2 consecutive propeptides follow at residues 22-124 and 145-174; these read DPHQ…TFVK and FYHL…PIGS.

Belongs to the orcokinin family. In terms of tissue distribution, orcokinin-like peptide: Expressed in corpora cardiaca (CC), corpora allata (CA), antennal lobe (AL) and gnathal ganglion (GNG) (at protein level). Expression in CC, CA and GNG detected in some animals, in AL in few animals (at protein level). Orcokinin-like peptide precursor-related peptide: Expressed in corpora cardiaca (CC), corpora allata (CA), antennal lobe (AL) and gnathal ganglion (GNG) (at protein level). Expression in GNG detected in most animals, expression in CC, CA and AL detected in some animals (at protein level).

It is found in the secreted. In terms of biological role, myotropic peptides. The chain is Orcokinin peptides from Agrotis ipsilon (Black cutworm moth).